Reading from the N-terminus, the 209-residue chain is Small ribosomal subunit protein uS4 (209 aa).

The S4 RNA-binding domain occupies 99–164 (TRLDNVVYRM…IPRVQELKEL (66 aa)).

This sequence belongs to the universal ribosomal protein uS4 family. In terms of assembly, part of the 30S ribosomal subunit. Contacts protein S5. The interaction surface between S4 and S5 is involved in control of translational fidelity.

One of the primary rRNA binding proteins, it binds directly to 16S rRNA where it nucleates assembly of the body of the 30S subunit. Its function is as follows. With S5 and S12 plays an important role in translational accuracy. The sequence is that of Small ribosomal subunit protein uS4 from Natranaerobius thermophilus (strain ATCC BAA-1301 / DSM 18059 / JW/NM-WN-LF).